Consider the following 309-residue polypeptide: Olfactory receptor 8B4 (309 aa).

Over 1–25 (MTLRNSSSVTEFILVGLSEQPELQL) the chain is Extracellular. An N-linked (GlcNAc...) asparagine glycan is attached at asparagine 5. A helical transmembrane segment spans residues 26 to 46 (PLFLLFLGIYVFTVVGNLGLI). At 47–54 (TLIGINPS) the chain is on the cytoplasmic side. A helical membrane pass occupies residues 55 to 75 (LHTPMYFFLFNLSFIDLCYSC). The Extracellular portion of the chain corresponds to 76–98 (VFTPKMLNDFVSESIISYVGCMT). Cysteine 96 and cysteine 188 are joined by a disulfide. Residues 99-119 (QLFFFCFFVNSECYVLVSMAY) form a helical membrane-spanning segment. The Cytoplasmic segment spans residues 120–138 (DRYVAICNPLLYMVTMSPR). The helical transmembrane segment at 139 to 159 (VCFLLMFGSYVVGFAGAMAHT) threads the bilayer. Over 160–196 (GSMLRLTFCDSNVIDHYLCDVLPLLQLSCTSTHVSEL) the chain is Extracellular. Residues 197–216 (VFFIVVGVITMLSSISIVIS) traverse the membrane as a helical segment. Residues 217–236 (YALILSNILCIPSAEGRSKA) are Cytoplasmic-facing. Residues 237-257 (FSTWGSHIIAVALFFGSGTFT) form a helical membrane-spanning segment. Topologically, residues 258 to 270 (YLTTSFPGSMNHG) are extracellular. Residues 271–291 (RFASVFYTNVVPMLNPSIYSL) traverse the membrane as a helical segment. At 292–309 (RNKDDKLALGKTLKRVLF) the chain is on the cytoplasmic side.

It belongs to the G-protein coupled receptor 1 family.

It localises to the cell membrane. Its function is as follows. Odorant receptor. The protein is Olfactory receptor 8B4 (OR8B4) of Homo sapiens (Human).